A 466-amino-acid chain; its full sequence is Transcription factor SOX-10 (466 aa).

Disordered regions lie at residues 1–67, 160–198, 213–275, 355–375, and 433–466; these read MAEE…DDDK, LRMQHKKDHPDYKYQPRRRKNGKAAQGEAECPGGETDQG, DHRH…DFGN, QVKTETTGPQGPPHYTDQPST, and RPLYTAISDPSPSGPQSHSPTHWEQPVYTTLSRP. A compositionally biased stretch (low complexity) spans 23-32; that stretch reads LSPSSAPSLG. Serine 24 is modified (phosphoserine). The dimerization (DIM) stretch occupies residues 62 to 102; it reads EADDDKFPVCIREAVSQVLSGYDWTLVPMPVRVNGASKSKP. The HMG box DNA-binding region spans 104–172; the sequence is VKRPMNAFMV…QHKKDHPDYK (69 aa). Composition is skewed to basic and acidic residues over residues 160–173 and 254–271; these read LRMQHKKDHPDYKY and ADPKRDGRSLGEGGKPHI. Residues 228–310 are transactivation domain (TAM); it reads PEHPSGQSHG…LPPNGHPGHV (83 aa). Residues 353 to 466 form a transactivation domain (TAC) region; that stretch reads KAQVKTETTG…QPVYTTLSRP (114 aa). Residues 440–466 are compositionally biased toward polar residues; sequence SDPSPSGPQSHSPTHWEQPVYTTLSRP.

Monomer. Interacts with Armcx3 at the mitochondrial outer membrane surface. Interacts with PAX3. In terms of tissue distribution, predominant expression in glial cells of the nervous system.

Its subcellular location is the cytoplasm. The protein localises to the nucleus. It localises to the mitochondrion outer membrane. Its function is as follows. Transcription factor that plays a central role in developing and mature glia. Specifically activates expression of myelin genes, during oligodendrocyte (OL) maturation, such as DUSP15 and MYRF, thereby playing a central role in oligodendrocyte maturation and CNS myelination. Once induced, MYRF cooperates with SOX10 to implement the myelination program. Transcriptional activator of MITF, acting synergistically with PAX3. Transcriptional activator of MBP, via binding to the gene promoter. This chain is Transcription factor SOX-10 (Sox10), found in Rattus norvegicus (Rat).